A 544-amino-acid chain; its full sequence is CTP synthase (544 aa).

The segment at 1 to 267 (MAKFVFITGG…AQRVLQILNL (267 aa)) is amidoligase domain. CTP is bound at residue Ser-13. Ser-13 is a UTP binding site. 14-19 (SIGKGI) contacts ATP. Position 54 (Tyr-54) interacts with L-glutamine. Residue Asp-71 coordinates ATP. Residues Asp-71 and Glu-141 each coordinate Mg(2+). Residues 148 to 150 (DIE), 188 to 193 (KTKPTQ), and Lys-224 each bind CTP. UTP contacts are provided by residues 188 to 193 (KTKPTQ) and Lys-224. A Glutamine amidotransferase type-1 domain is found at 292–534 (EIAIVGKYVR…IEAALRSRSR (243 aa)). Gly-354 is an L-glutamine binding site. Cys-381 functions as the Nucleophile; for glutamine hydrolysis in the catalytic mechanism. L-glutamine contacts are provided by residues 382–385 (LGMQ), Glu-405, and Arg-462. Residues His-507 and Glu-509 contribute to the active site.

Belongs to the CTP synthase family. Homotetramer.

It carries out the reaction UTP + L-glutamine + ATP + H2O = CTP + L-glutamate + ADP + phosphate + 2 H(+). It catalyses the reaction L-glutamine + H2O = L-glutamate + NH4(+). The catalysed reaction is UTP + NH4(+) + ATP = CTP + ADP + phosphate + 2 H(+). Its pathway is pyrimidine metabolism; CTP biosynthesis via de novo pathway; CTP from UDP: step 2/2. With respect to regulation, allosterically activated by GTP, when glutamine is the substrate; GTP has no effect on the reaction when ammonia is the substrate. The allosteric effector GTP functions by stabilizing the protein conformation that binds the tetrahedral intermediate(s) formed during glutamine hydrolysis. Inhibited by the product CTP, via allosteric rather than competitive inhibition. In terms of biological role, catalyzes the ATP-dependent amination of UTP to CTP with either L-glutamine or ammonia as the source of nitrogen. Regulates intracellular CTP levels through interactions with the four ribonucleotide triphosphates. The polypeptide is CTP synthase (Synechococcus sp. (strain JA-3-3Ab) (Cyanobacteria bacterium Yellowstone A-Prime)).